Reading from the N-terminus, the 130-residue chain is Small ribosomal subunit protein uS8 (130 aa).

This sequence belongs to the universal ribosomal protein uS8 family. In terms of assembly, part of the 30S ribosomal subunit. Contacts proteins S5 and S12.

Its function is as follows. One of the primary rRNA binding proteins, it binds directly to 16S rRNA central domain where it helps coordinate assembly of the platform of the 30S subunit. The protein is Small ribosomal subunit protein uS8 of Photobacterium profundum (strain SS9).